The following is a 492-amino-acid chain: Catalase isozyme A (492 aa).

Positions 1 to 23 (MDPCKFRPSSSFDTKTTTTNAGA) are disordered. The segment covering 8-21 (PSSSFDTKTTTTNA) has biased composition (polar residues). Residues His-65 and Asn-138 contribute to the active site. A heme-binding site is contributed by Tyr-348.

It belongs to the catalase family. As to quaternary structure, homotetramer. The cofactor is heme.

The protein resides in the peroxisome. It is found in the glyoxysome. The catalysed reaction is 2 H2O2 = O2 + 2 H2O. Functionally, occurs in almost all aerobically respiring organisms and serves to protect cells from the toxic effects of hydrogen peroxide. The chain is Catalase isozyme A from Oryza sativa subsp. indica (Rice).